The following is a 161-amino-acid chain: Bifurcating [FeFe] hydrogenase gamma subunit (161 aa).

[2Fe-2S] cluster is bound by residues Cys-78, Cys-83, Cys-119, and Cys-123.

It belongs to the complex I 24 kDa subunit family. Heterotrimer composed of HydA (alpha subunit), HydB (beta subunit) and HydC (gamma subunit). Near neutral and acidic pH conditions favor oligomerization of the heterotrimeric holoenzyme. [2Fe-2S] cluster is required as a cofactor.

It localises to the cytoplasm. The enzyme catalyses 2 H2 + 2 oxidized [2Fe-2S]-[ferredoxin] + NAD(+) = 2 reduced [2Fe-2S]-[ferredoxin] + NADH + 3 H(+). Functionally, catalyzes the oxidation of the physiological electron carriers NADH and reduced ferredoxin, coupled to the production of H(2). Acts as a bifurcating [FeFe] hydrogenase, which uses the exergonic oxidation of reduced ferredoxin to drive the unfavorable oxidation of NADH to produce H(2). The gamma subunit might be the site where reduced ferredoxin is oxidized. The polypeptide is Bifurcating [FeFe] hydrogenase gamma subunit (Thermotoga maritima (strain ATCC 43589 / DSM 3109 / JCM 10099 / NBRC 100826 / MSB8)).